The chain runs to 362 residues: Homoserine O-acetyltransferase FUB5 (362 aa).

The region spanning 12-335 (NVMIICHALS…VSDDGHDAFL (324 aa)) is the AB hydrolase-1 domain. Catalysis depends on Ser110, which acts as the Nucleophile. A disordered region spans residues 195-232 (RFGRDTGNKKKTQQQDSKTIPNNGTPIHSQGGADETPV). Positions 208 to 222 (QQDSKTIPNNGTPIH) are enriched in polar residues. Catalysis depends on residues Asp302 and His331.

Belongs to the AB hydrolase superfamily. MetX family.

The catalysed reaction is L-homoserine + acetyl-CoA = O-acetyl-L-homoserine + CoA. It functions in the pathway mycotoxin biosynthesis. In terms of biological role, homoserine O-acetyltransferase; part of the gene cluster that mediates the biosynthesis of fusaric acid, a mycotoxin with low to moderate toxicity to animals and humans, but with high phytotoxic properties. L-aspartate is suggested as fusaric acid amino acid precursor that is activated and further processed to O-acetyl-L-homoserine by cluster enzymes aspartate kinase FUB3 and homoserine O-acetyltransferase FUB5, as well as enzymes of the primary metabolism. The polyketide synthase (PKS) FUB1 generates the triketide trans-2-hexenal which is presumptively released by the hydrolase FUB4 and linked to the NRPS-bound amino acid precursor by NAD(P)-dependent dehydrogenase FUB6. FUB1, FUB4, and the non-canonical NRPS Fub8 may form an enzyme complex. Further processing of the NRPS-bound intermediate might be carried out by FUB6 and the O-acetylhomoserine FUB7, enabling a spontaneous electrocyclization to close the carbon backbone of fusaric acid. Dihydrofusaric acid is likely to be released via reduction by the thioester reductase (TR) domain of FUB8 whereupon the final oxidation to fusaric acid may (also) be performed by the FMN-dependent dehydrogenase FUB9. This is Homoserine O-acetyltransferase FUB5 from Fusarium oxysporum f. sp. lycopersici (strain 4287 / CBS 123668 / FGSC 9935 / NRRL 34936) (Fusarium vascular wilt of tomato).